We begin with the raw amino-acid sequence, 414 residues long: Cytochrome c-554 (414 aa).

An N-terminal signal peptide occupies residues 1 to 24 (MQSSRPSDRQLAIVVSVAVGIVVA). 15 residues coordinate heme: Met-110, Cys-131, Cys-134, His-135, Met-154, Cys-179, Cys-182, His-183, Met-283, Cys-294, Cys-297, His-298, Cys-378, Cys-381, and His-382.

Post-translationally, binds 4 heme groups per subunit. In terms of processing, the N-terminus is blocked.

The protein resides in the periplasm. In terms of biological role, serves as the immediate electron donor to the oxidized BChl2 (bacteriochlorophyll dimer) that is oxidized in the first step of light-induced charge separation. Can also oxidize low-potential substrates. This Chloroflexus aurantiacus (strain ATCC 29366 / DSM 635 / J-10-fl) protein is Cytochrome c-554 (puf2C).